The primary structure comprises 66 residues: Conotoxin Cal5.2 (66 aa).

The first 20 residues, 1-20 (MMYCLPVVCILLLLIPSSAT), serve as a signal peptide directing secretion. Positions 21–51 (FVVESRLEKDQAQSFTGDAWKRVSPIHEMIQ) are excised as a propeptide. Val-65 carries the post-translational modification Valine amide.

This sequence belongs to the conotoxin T superfamily. In terms of processing, contains 2 disulfide bonds that can be either 'C1-C3, C2-C4' or 'C1-C4, C2-C3', since these disulfide connectivities have been observed for conotoxins with cysteine framework V (for examples, see AC P0DQQ7 and AC P81755). In terms of tissue distribution, expressed by the venom duct.

It localises to the secreted. Functionally, probable neurotoxin with unknown target. Possibly targets ion channels. In Californiconus californicus (California cone), this protein is Conotoxin Cal5.2.